The sequence spans 270 residues: NADPH-dependent 7-cyano-7-deazaguanine reductase (270 aa).

79–81 is a binding site for substrate; sequence IES. Position 81–82 (81–82) interacts with NADPH; sequence SK. Cys177 acts as the Thioimide intermediate in catalysis. The active-site Proton donor is Asp184. 216 to 217 provides a ligand contact to substrate; it reads HE. 245–246 provides a ligand contact to NADPH; sequence RG.

It belongs to the GTP cyclohydrolase I family. QueF type 2 subfamily. In terms of assembly, homodimer.

Its subcellular location is the cytoplasm. It catalyses the reaction 7-aminomethyl-7-carbaguanine + 2 NADP(+) = 7-cyano-7-deazaguanine + 2 NADPH + 3 H(+). It participates in tRNA modification; tRNA-queuosine biosynthesis. In terms of biological role, catalyzes the NADPH-dependent reduction of 7-cyano-7-deazaguanine (preQ0) to 7-aminomethyl-7-deazaguanine (preQ1). The sequence is that of NADPH-dependent 7-cyano-7-deazaguanine reductase from Acinetobacter baumannii (strain ATCC 17978 / DSM 105126 / CIP 53.77 / LMG 1025 / NCDC KC755 / 5377).